Consider the following 275-residue polypeptide: Tryptophan synthase alpha chain (275 aa).

Active-site proton acceptor residues include Glu-58 and Asp-69.

The protein belongs to the TrpA family. As to quaternary structure, tetramer of two alpha and two beta chains. Ubiquitously expressed at low levels in seedlings, roots, hypocotyls, cotyledons, stems, leaves, inflorescences, flowers, siliques and seeds.

It localises to the cytoplasm. The catalysed reaction is (1S,2R)-1-C-(indol-3-yl)glycerol 3-phosphate + L-serine = D-glyceraldehyde 3-phosphate + L-tryptophan + H2O. It catalyses the reaction (1S,2R)-1-C-(indol-3-yl)glycerol 3-phosphate = indole + D-glyceraldehyde 3-phosphate. It participates in amino-acid biosynthesis; L-tryptophan biosynthesis; L-tryptophan from chorismate: step 5/5. In terms of biological role, the alpha subunit is responsible for the aldol cleavage of indoleglycerol phosphate to indole and glyceraldehyde 3-phosphate. Contributes to the tryptophan-independent indole biosynthesis, and possibly to auxin production. This chain is Tryptophan synthase alpha chain (TRPA1), found in Arabidopsis thaliana (Mouse-ear cress).